The chain runs to 183 residues: UPF0398 protein BLi02355/BL05236 (183 aa).

This sequence belongs to the UPF0398 family.

The polypeptide is UPF0398 protein BLi02355/BL05236 (Bacillus licheniformis (strain ATCC 14580 / DSM 13 / JCM 2505 / CCUG 7422 / NBRC 12200 / NCIMB 9375 / NCTC 10341 / NRRL NRS-1264 / Gibson 46)).